Consider the following 707-residue polypeptide: MVKLSSIIKARKANALAKKNDKIKKKDTDKGIRQKHSKKEGKDETLKRDVEKFIQNVNSEDTPSEDDSMSMDAFLEGGFEELDSANSNDAGSSRKRKNLPNENTQDSTSESSEEEEDGLESYQKQLEGLKEKDPEFYKFLEQNDQDLLEFNAAETDAMAKEIDENERLKSSSGKIVLTSDTIQQWQKLLETNHSLTTLQKVVQAFKAAAFLNEEEAEDLKYTISDSKVFNDLLLLAIQYVPKVLNYHVPIQEDAKGKKFINTDSKVLPKLRPVLKSYGFSILRLLEGMTDAKNISLLLREAQNVLPYMITYRKFLKQFTQATVEVWSSTRDDSVRFSAVVLLRTLCLTADITLLEFVLKEVYLGMARQSAYTTVHTLDKINFLKNSAVNLFLLDAESCYLIGFRYIRQLAITLRNTIHQPSKDSRKPVQSWSYVHSLDFWARLLSQAAWLSREKGVASELQSLVYPLVQIALGVIMSSPSSQLFPMRFHIIRSLIYLSRHTGVFIPLAPSLFEVLDSSYVSRKAKASTLKPLDFDVELRASSSYLRTKVYQDGLIDQLLELLSEYYVLYATDISFPELVIPAIVRSKRFAKRSKNAKLNRGLLTLVNRLEQQSKFMTEKRNQQKFAPIDSDSVEQFAQTIDWQQTPLGIYVVTQRQTREEQRKLIRESVQQDQEHKEQMRQKKKQALKSDDIELDDLSEEEAEDIDE.

Disordered stretches follow at residues 15–122 and 667–707; these read ALAK…LESY and ESVQ…DIDE. Composition is skewed to basic and acidic residues over residues 18–32 and 40–52; these read KKND…DKGI and EGKD…DVEK. Serine 112 carries the phosphoserine modification. A coiled-coil region spans residues 659-700; it reads EEQRKLIRESVQQDQEHKEQMRQKKKQALKSDDIELDDLSEE. Residues 692-707 show a composition bias toward acidic residues; sequence IELDDLSEEEAEDIDE.

The protein belongs to the NOC2 family.

The protein localises to the nucleus. It is found in the nucleolus. This is an uncharacterized protein from Schizosaccharomyces pombe (strain 972 / ATCC 24843) (Fission yeast).